We begin with the raw amino-acid sequence, 539 residues long: T-complex protein 1 subunit zeta (539 aa).

This sequence belongs to the TCP-1 chaperonin family. As to quaternary structure, heterooligomeric complex of about 850 to 900 kDa that forms two stacked rings, 12 to 16 nm in diameter.

The protein resides in the cytoplasm. Functionally, molecular chaperone; assists the folding of proteins upon ATP hydrolysis. Known to play a role, in vitro, in the folding of actin and tubulin. The polypeptide is T-complex protein 1 subunit zeta (cct-6) (Caenorhabditis elegans).